A 501-amino-acid chain; its full sequence is Beta-secretase 1 (501 aa).

A signal peptide spans M1–G21. The propeptide occupies S22 to R45. The Extracellular segment spans residues S22–T457. The interval L39–G58 is disordered. Positions Y75–A416 constitute a Peptidase A1 domain. D93 is an active-site residue. The residue at position 126 (K126) is an N6-acetyllysine. Residues N153, N172, and N223 are each glycosylated (N-linked (GlcNAc...) asparagine). 3 cysteine pairs are disulfide-bonded: C216–C420, C278–C443, and C330–C380. 3 positions are modified to N6-acetyllysine: K275, K279, and K285. D289 is a catalytic residue. 3 positions are modified to N6-acetyllysine: K299, K300, and K307. N-linked (GlcNAc...) asparagine glycosylation is present at N354. Residues I458–C478 form a helical membrane-spanning segment. 4 S-palmitoyl cysteine lipidation sites follow: C474, C478, C482, and C485. Over Q479–K501 the chain is Cytoplasmic. The interval Q479 to K501 is interaction with RTN3. The short motif at D496 to L500 is the DXXLL element. S498 bears the Phosphoserine mark. A Glycyl lysine isopeptide (Lys-Gly) (interchain with G-Cter in ubiquitin) cross-link involves residue K501.

Belongs to the peptidase A1 family. Monomer. Interacts (via DXXLL motif) with GGA1, GGA2 and GGA3 (via their VHS domain); the interaction highly increases when BACE1 is phosphorylated at Ser-498. Interacts with RTN1; RTN2; RTN3 and RTN4; the interaction leads to inhibition of amyloid precursor protein processing. Interacts with SNX6. Interacts with PCSK9. Interacts with NAT8 and NAT8B. Interacts with BIN1. Interacts (via extracellular domain) with ADAM10 (via extracellular domain). Interacts with SORL1; this interaction may affect binding with APP and hence reduce APP cleavage. Interacts with NRDC AND NRG1. Palmitoylation mediates lipid raft localization. In terms of processing, acetylated in the endoplasmic reticulum at Lys-126, Lys-275, Lys-279, Lys-285, Lys-299, Lys-300 and Lys-307. Acetylation by NAT8 and NAT8B is transient and deacetylation probably occurs in the Golgi. Acetylation regulates the maturation, the transport to the plasma membrane, the stability and the expression of the protein. Post-translationally, ubiquitinated at Lys-501, ubiquitination leads to lysosomal degradation. Monoubiquitinated and 'Lys-63'-linked polyubitinated. Deubiquitnated by USP8; inhibits lysosomal degradation. Phosphorylation at Ser-498 is required for interaction with GGA1 and retrograded transport from endosomal compartments to the trans-Golgi network. Non-phosphorylated BACE1 enters a direct recycling route to the cell surface. In terms of processing, N-Glycosylated. Addition of a bisecting N-acetylglucosamine by MGAT3 blocks lysosomal targeting, further degradation and is required for maintaining stability under stress conditions.

Its subcellular location is the cell membrane. The protein resides in the golgi apparatus. It localises to the trans-Golgi network. It is found in the endoplasmic reticulum. The protein localises to the endosome. Its subcellular location is the cell surface. The protein resides in the cytoplasmic vesicle membrane. It localises to the membrane raft. It is found in the lysosome. The protein localises to the late endosome. Its subcellular location is the early endosome. The protein resides in the recycling endosome. It localises to the cell projection. It is found in the axon. The protein localises to the dendrite. It catalyses the reaction Broad endopeptidase specificity. Cleaves Glu-Val-Asn-Leu-|-Asp-Ala-Glu-Phe in the Swedish variant of Alzheimer's amyloid precursor protein.. With respect to regulation, inhibited by RTN3 and RTN4. In terms of biological role, responsible for the proteolytic processing of the amyloid precursor protein (APP). Cleaves at the N-terminus of the A-beta peptide sequence, between residues 671 and 672 of APP, leads to the generation and extracellular release of beta-cleaved soluble APP, and a corresponding cell-associated C-terminal fragment which is later released by gamma-secretase. Cleaves CHL1. The protein is Beta-secretase 1 (BACE1) of Bos taurus (Bovine).